The primary structure comprises 161 residues: Cyclic pyranopterin monophosphate synthase (161 aa).

Residues 73 to 75 and 110 to 111 each bind substrate; these read LCH and ME. Asp-125 is an active-site residue.

Belongs to the MoaC family. Homohexamer; trimer of dimers.

It catalyses the reaction (8S)-3',8-cyclo-7,8-dihydroguanosine 5'-triphosphate = cyclic pyranopterin phosphate + diphosphate. Its pathway is cofactor biosynthesis; molybdopterin biosynthesis. In terms of biological role, catalyzes the conversion of (8S)-3',8-cyclo-7,8-dihydroguanosine 5'-triphosphate to cyclic pyranopterin monophosphate (cPMP). The polypeptide is Cyclic pyranopterin monophosphate synthase (Pseudomonas syringae pv. syringae (strain B728a)).